A 98-amino-acid polypeptide reads, in one-letter code: NADH-ubiquinone oxidoreductase chain 4L (98 aa).

3 consecutive transmembrane segments (helical) span residues 1-21 (MPVVYVNIFLAFIVSLMGLLV), 29-49 (SLLCLEGMMLSLFVMLTVTVL), and 61-81 (IILLVFAACEAALGLSLLVMV).

Belongs to the complex I subunit 4L family. In terms of assembly, core subunit of respiratory chain NADH dehydrogenase (Complex I) which is composed of 45 different subunits.

Its subcellular location is the mitochondrion inner membrane. The enzyme catalyses a ubiquinone + NADH + 5 H(+)(in) = a ubiquinol + NAD(+) + 4 H(+)(out). Functionally, core subunit of the mitochondrial membrane respiratory chain NADH dehydrogenase (Complex I) which catalyzes electron transfer from NADH through the respiratory chain, using ubiquinone as an electron acceptor. Part of the enzyme membrane arm which is embedded in the lipid bilayer and involved in proton translocation. This chain is NADH-ubiquinone oxidoreductase chain 4L (MT-ND4L), found in Ursus arctos (Brown bear).